The primary structure comprises 370 residues: 3-dehydroquinate synthase (370 aa).

NAD(+)-binding positions include 112 to 116 (GVVGD), 136 to 137 (TS), Lys149, Lys158, and 176 to 179 (TLRT). Zn(2+) contacts are provided by Glu191, His254, and His276.

This sequence belongs to the sugar phosphate cyclases superfamily. Dehydroquinate synthase family. Co(2+) serves as cofactor. Requires Zn(2+) as cofactor. The cofactor is NAD(+).

It localises to the cytoplasm. The catalysed reaction is 7-phospho-2-dehydro-3-deoxy-D-arabino-heptonate = 3-dehydroquinate + phosphate. It functions in the pathway metabolic intermediate biosynthesis; chorismate biosynthesis; chorismate from D-erythrose 4-phosphate and phosphoenolpyruvate: step 2/7. Catalyzes the conversion of 3-deoxy-D-arabino-heptulosonate 7-phosphate (DAHP) to dehydroquinate (DHQ). This Xanthomonas oryzae pv. oryzae (strain PXO99A) protein is 3-dehydroquinate synthase.